We begin with the raw amino-acid sequence, 249 residues long: Zinc finger AN1 and C2H2 domain-containing stress-associated protein 13 (249 aa).

2 AN1-type zinc fingers span residues proline 7–valine 55 and alanine 95–serine 145. Positions 13, 18, 28, 31, 36, 39, 45, 47, 101, 106, 118, 121, 126, 129, 135, and 137 each coordinate Zn(2+). The disordered stretch occupies residues phenylalanine 194–asparagine 213. Residues asparagine 201–glycine 210 show a composition bias toward basic and acidic residues. The C2H2-type zinc finger occupies aspartate 220–histidine 243.

Functionally, may be involved in environmental stress response. The protein is Zinc finger AN1 and C2H2 domain-containing stress-associated protein 13 (SAP13) of Arabidopsis thaliana (Mouse-ear cress).